Reading from the N-terminus, the 255-residue chain is Hydroxyacylglutathione hydrolase (255 aa).

Residues His56, His58, Asp60, His61, His114, Asp133, and His171 each contribute to the Zn(2+) site.

It belongs to the metallo-beta-lactamase superfamily. Glyoxalase II family. Monomer. It depends on Zn(2+) as a cofactor.

It catalyses the reaction an S-(2-hydroxyacyl)glutathione + H2O = a 2-hydroxy carboxylate + glutathione + H(+). It participates in secondary metabolite metabolism; methylglyoxal degradation; (R)-lactate from methylglyoxal: step 2/2. Thiolesterase that catalyzes the hydrolysis of S-D-lactoyl-glutathione to form glutathione and D-lactic acid. In Cereibacter sphaeroides (strain ATCC 17025 / ATH 2.4.3) (Rhodobacter sphaeroides), this protein is Hydroxyacylglutathione hydrolase.